A 102-amino-acid chain; its full sequence is Large ribosomal subunit protein bL21 (102 aa).

Belongs to the bacterial ribosomal protein bL21 family. Part of the 50S ribosomal subunit. Contacts protein L20.

Its function is as follows. This protein binds to 23S rRNA in the presence of protein L20. This is Large ribosomal subunit protein bL21 from Campylobacter jejuni subsp. doylei (strain ATCC BAA-1458 / RM4099 / 269.97).